The chain runs to 204 residues: Ribonuclease HII (204 aa).

Residues 14–203 (VGLCGVDEAG…VRLLLDQTSL (190 aa)) enclose the RNase H type-2 domain. A divalent metal cation is bound by residues aspartate 20, glutamate 21, and aspartate 112.

This sequence belongs to the RNase HII family. Mn(2+) is required as a cofactor. Mg(2+) serves as cofactor.

It localises to the cytoplasm. The catalysed reaction is Endonucleolytic cleavage to 5'-phosphomonoester.. Functionally, endonuclease that specifically degrades the RNA of RNA-DNA hybrids. This Thiobacillus denitrificans (strain ATCC 25259 / T1) protein is Ribonuclease HII.